The primary structure comprises 425 residues: Trigger factor (425 aa).

Positions 163–248 constitute a PPIase FKBP-type domain; that stretch reads GDTAVIDFEG…IHEIKTKELP (86 aa).

It belongs to the FKBP-type PPIase family. Tig subfamily.

The protein localises to the cytoplasm. It carries out the reaction [protein]-peptidylproline (omega=180) = [protein]-peptidylproline (omega=0). Functionally, involved in protein export. Acts as a chaperone by maintaining the newly synthesized protein in an open conformation. Functions as a peptidyl-prolyl cis-trans isomerase. This is Trigger factor from Bacillus mycoides (strain KBAB4) (Bacillus weihenstephanensis).